Here is a 302-residue protein sequence, read N- to C-terminus: Dioxygenase olcK (302 aa).

Residues H136, D138, and H213 each contribute to the Fe cation site.

This sequence belongs to the PhyH family. As to quaternary structure, homodimer. Fe cation serves as cofactor.

Its subcellular location is the peroxisome matrix. Its pathway is secondary metabolite biosynthesis; terpenoid biosynthesis. Functionally, dioxygenase; part of the gene cluster that mediates the biosynthesis of 15-deoxyoxalicine B. The first step of the pathway is the synthesis of nicotinyl-CoA from nicotinic acid by the nicotinic acid-CoA ligase olcI. Nicotinyl-CoA is then a substrate of polyketide synthase olcA to produce 4-hydroxy-6-(3-pyridinyl)-2H-pyran-2-one (HPPO) which is further prenylated by the polyprenyl transferase olcH to yield geranylgeranyl-HPPO. Geranylgeranyl pyrophosphate is provided by the cluster-specific geranylgeranyl pyrophosphate synthase olcC. The FAD-dependent monooxygenase olcE catalyzes the epoxidation of geranylgeranyl-HPPO and the terpene cyclase olcD catalyzes the cyclization of the terpenoid component, resulting in the formation of the tricyclic terpene moiety seen in predecaturin E. The cytochrome P450 monooxygenase then catalyzes the allylic oxidation of predecaturin E, which is followed by spirocylization with concomitant loss of one molecule of water to form decaturin E. Decaturin E is the substrate of the cytochrome P450 monooxygenase olcJ which hydroxylates it at the C-29 position to form decaturin F. The short-chain dehydrogenase/reductase olcF may catalyze the oxidation of decaturin F to generate the 29-hydroxyl-27-one intermediate, and subsequent hemiacetal formation probably leads to the formation of decaturin C. The dioxygenase olcK may be a peroxisomal enzyme that catalyzes the hydroxylation of decaturin C into decaturin A once decaturin C is shuttled into the peroxisome by the MFS transporter olcL. Finally the cytochrome P450 monooxygenase olcB catalyzes the oxidative rearrangement to yield 15-deoxyoxalicine B. In the absence of olcJ, decaturin E may be shunted to a pathway in which it is oxidized to a ketone, possibly by olcF, to form decaturin D, which undergoes further allylic oxidation to yield decaturin G. Moreover, in the absence of oclK or oclL, oclB can convert decaturin C into 15-deoxyoxalicine A. This Penicillium canescens protein is Dioxygenase olcK.